The chain runs to 262 residues: Kallikrein-1 (262 aa).

Positions 1-18 (MWFLVLCLALSLGGTGAA) are cleaved as a signal peptide. A propeptide spans 19–24 (PPIQSR) (activation peptide). The Peptidase S1 domain occupies 25–259 (IVGGWECEQH…YVKWIEDTIA (235 aa)). 5 cysteine pairs are disulfide-bonded: C31–C174, C50–C66, C153–C220, C185–C199, and C210–C235. H65 functions as the Charge relay system in the catalytic mechanism. S93 carries O-linked (GalNAc...) serine glycosylation. An N-linked (GlcNAc...) asparagine glycan is attached at N102. O-linked (GalNAc...) serine glycosylation is present at S104. N-linked (GlcNAc...) asparagine glycosylation occurs at N108. Catalysis depends on D120, which acts as the Charge relay system. A glycan (N-linked (GlcNAc...) asparagine; partial) is linked at N165. The O-linked (GalNAc...) serine glycan is linked to S167. S214 serves as the catalytic Charge relay system.

It belongs to the peptidase S1 family. Kallikrein subfamily. Post-translationally, the O-linked polysaccharides on Ser-93, Ser-104 and Ser-167 are probably the mucin type linked to GalNAc. In PubMed:3163150, GalNAc was detected with the corresponding peptides but not located. Isoform 2 is expressed in pancreas, salivary glands, kidney, colon, prostate gland, testis, spleen and the colon adenocarcinoma cell line T84.

The enzyme catalyses Preferential cleavage of Arg-|-Xaa bonds in small molecule substrates. Highly selective action to release kallidin (lysyl-bradykinin) from kininogen involves hydrolysis of Met-|-Xaa or Leu-|-Xaa.. Glandular kallikreins cleave Met-Lys and Arg-Ser bonds in kininogen to release Lys-bradykinin. In terms of biological role, (Microbial infection) Cleaves Neisseria meningitidis NHBA in saliva; Neisseria is an obligate commensal of the nasopharyngeal mucosa. The chain is Kallikrein-1 (KLK1) from Homo sapiens (Human).